Consider the following 458-residue polypeptide: UDP-N-acetylmuramate--L-alanine ligase (458 aa).

112-118 (GTHGKTT) contributes to the ATP binding site.

The protein belongs to the MurCDEF family.

It is found in the cytoplasm. It catalyses the reaction UDP-N-acetyl-alpha-D-muramate + L-alanine + ATP = UDP-N-acetyl-alpha-D-muramoyl-L-alanine + ADP + phosphate + H(+). Its pathway is cell wall biogenesis; peptidoglycan biosynthesis. In terms of biological role, cell wall formation. This Syntrophotalea carbinolica (strain DSM 2380 / NBRC 103641 / GraBd1) (Pelobacter carbinolicus) protein is UDP-N-acetylmuramate--L-alanine ligase.